Reading from the N-terminus, the 544-residue chain is Chaperonin GroEL 2 (544 aa).

ATP-binding positions include 29–32 (TLGP), 86–90 (DGTTT), Gly-413, 479–481 (NAA), and Asp-495.

The protein belongs to the chaperonin (HSP60) family. As to quaternary structure, forms a cylinder of 14 subunits composed of two heptameric rings stacked back-to-back. Interacts with the co-chaperonin GroES.

The protein resides in the cytoplasm. The catalysed reaction is ATP + H2O + a folded polypeptide = ADP + phosphate + an unfolded polypeptide.. Together with its co-chaperonin GroES, plays an essential role in assisting protein folding. The GroEL-GroES system forms a nano-cage that allows encapsulation of the non-native substrate proteins and provides a physical environment optimized to promote and accelerate protein folding. This is Chaperonin GroEL 2 from Synechococcus sp. (strain WH7803).